Here is a 133-residue protein sequence, read N- to C-terminus: MSWQAYVDEHLMCDIEGTGQHLTSAAILGLDGTVWAQSAKFPQFKPEEMKGIIKEFDEAGTLAPTGMFIAGAKYMVLQGEPGAVIRGKKGAGGICIKKTGQAMIMGIYDEPVAPGQCNMVVERLGDYLLEQGM.

Belongs to the profilin family. As to quaternary structure, occurs in many kinds of cells as a complex with monomeric actin in a 1:1 ratio.

Its subcellular location is the cytoplasm. The protein localises to the cytoskeleton. Binds to actin and affects the structure of the cytoskeleton. At high concentrations, profilin prevents the polymerization of actin, whereas it enhances it at low concentrations. By binding to PIP2, it inhibits the formation of IP3 and DG. This is Profilin from Helianthus annuus (Common sunflower).